The primary structure comprises 376 residues: Multiphosphoryl transfer protein (376 aa).

The region spanning 2-142 (FQLSVQDIHP…EELRALLMGE (141 aa)) is the PTS EIIA type-2 domain. Histidine 62 functions as the Tele-phosphohistidine intermediate; for EIIA activity in the catalytic mechanism. A Phosphohistidine; by HPr modification is found at histidine 62. Residues 156–284 (TLDIVASDLL…LTSDDAPTDD (129 aa)) form a m domain region. An HPr domain is found at 285–375 (VLSAEFVVRN…DAIAAGLGEG (91 aa)). Histidine 299 serves as the catalytic Pros-phosphohistidine intermediate; for HPr activity. Phosphohistidine; by EI is present on histidine 299.

It is found in the cytoplasm. Functionally, the phosphoenolpyruvate-dependent sugar phosphotransferase system (sugar PTS), a major carbohydrate active transport system, catalyzes the phosphorylation of incoming sugar substrates concomitantly with their translocation across the cell membrane. The enzyme II FruAB PTS system is involved in fructose transport. This Escherichia coli O157:H7 protein is Multiphosphoryl transfer protein.